We begin with the raw amino-acid sequence, 481 residues long: 3-isopropylmalate dehydratase large subunit (481 aa).

The [4Fe-4S] cluster site is built by C363, C423, and C426. A disordered region spans residues 434–465; the sequence is LRPGQRAASTSNRNFEGRQGRGGRTHLVSPPV.

It belongs to the aconitase/IPM isomerase family. LeuC type 1 subfamily. As to quaternary structure, heterodimer of LeuC and LeuD. [4Fe-4S] cluster serves as cofactor.

It catalyses the reaction (2R,3S)-3-isopropylmalate = (2S)-2-isopropylmalate. It participates in amino-acid biosynthesis; L-leucine biosynthesis; L-leucine from 3-methyl-2-oxobutanoate: step 2/4. Its function is as follows. Catalyzes the isomerization between 2-isopropylmalate and 3-isopropylmalate, via the formation of 2-isopropylmaleate. The sequence is that of 3-isopropylmalate dehydratase large subunit from Salinispora tropica (strain ATCC BAA-916 / DSM 44818 / JCM 13857 / NBRC 105044 / CNB-440).